A 554-amino-acid chain; its full sequence is 2-succinyl-5-enolpyruvyl-6-hydroxy-3-cyclohexene-1-carboxylate synthase (554 aa).

This sequence belongs to the TPP enzyme family. MenD subfamily. Homodimer. The cofactor is Mg(2+). Requires Mn(2+) as cofactor. It depends on thiamine diphosphate as a cofactor.

The catalysed reaction is isochorismate + 2-oxoglutarate + H(+) = 5-enolpyruvoyl-6-hydroxy-2-succinyl-cyclohex-3-ene-1-carboxylate + CO2. It functions in the pathway quinol/quinone metabolism; 1,4-dihydroxy-2-naphthoate biosynthesis; 1,4-dihydroxy-2-naphthoate from chorismate: step 2/7. Its pathway is quinol/quinone metabolism; menaquinone biosynthesis. Its function is as follows. Catalyzes the thiamine diphosphate-dependent decarboxylation of 2-oxoglutarate and the subsequent addition of the resulting succinic semialdehyde-thiamine pyrophosphate anion to isochorismate to yield 2-succinyl-5-enolpyruvyl-6-hydroxy-3-cyclohexene-1-carboxylate (SEPHCHC). The chain is 2-succinyl-5-enolpyruvyl-6-hydroxy-3-cyclohexene-1-carboxylate synthase from Renibacterium salmoninarum (strain ATCC 33209 / DSM 20767 / JCM 11484 / NBRC 15589 / NCIMB 2235).